We begin with the raw amino-acid sequence, 60 residues long: Large ribosomal subunit protein bL32 (60 aa).

This sequence belongs to the bacterial ribosomal protein bL32 family.

The sequence is that of Large ribosomal subunit protein bL32 from Streptococcus gordonii (strain Challis / ATCC 35105 / BCRC 15272 / CH1 / DL1 / V288).